The sequence spans 150 residues: UPF0178 protein PP_5221 (150 aa).

This sequence belongs to the UPF0178 family.

The protein is UPF0178 protein PP_5221 of Pseudomonas putida (strain ATCC 47054 / DSM 6125 / CFBP 8728 / NCIMB 11950 / KT2440).